We begin with the raw amino-acid sequence, 493 residues long: 6-aminohexanoate-cyclic-dimer hydrolase (493 aa).

Active-site charge relay system residues include Lys72 and Ser150. The active-site Acyl-ester intermediate is Ser174.

The protein belongs to the amidase family. In terms of assembly, homodimer.

It catalyses the reaction 1,8-diazacyclotetradecane-2,9-dione + H2O = N-(6-aminohexanoyl)-6-aminohexanoate. It functions in the pathway xenobiotic degradation; nylon-6 oligomer degradation. Its activity is regulated as follows. Strongly inhibited by 1 uM diisopropylphosphofluoridate and 10 uM p-chloromercuribenzoate but scarcely inhibited by 100 mM EDTA in vitro. In terms of biological role, specifically catalyzes the hydrolysis of 6-aminohexanoic acid cyclic dimer (1,8-diazacyclotetradecane-2,9-dione) to form the linear dimer 6-aminohexanoyl-6-aminohexanoic acid. Is inactive on 6-aminohexanoic acid oligomers (degree of polymerization 2 to 6), various other cyclic amides, cyclic diamides, linear amides, oligopeptides, and casein. Allows the bacterium to grow on a medium containing 6-aminohexanoic acid cyclic dimer as the sole carbon and nitrogen sources. The sequence is that of 6-aminohexanoate-cyclic-dimer hydrolase (nylA) from Paenarthrobacter ureafaciens.